A 303-amino-acid chain; its full sequence is Zinc transporter ZIP9-A (303 aa).

Residues 7-27 (ISLLSLAMLVGCYVSGIIPLA) traverse the membrane as a helical segment. Asn29 carries N-linked (GlcNAc...) asparagine glycosylation. A run of 5 helical transmembrane segments spans residues 35 to 55 (LKLV…AVII), 102 to 122 (AYIG…DQIG), 142 to 162 (ITTT…LGAA), 172 to 192 (LIVF…LVSF), and 206 to 226 (HLLV…LGLS). Asn237 carries an N-linked (GlcNAc...) asparagine glycan. Transmembrane regions (helical) follow at residues 240–260 (GVAM…HVLP) and 282–302 (LEVC…IGHQ).

This sequence belongs to the ZIP transporter (TC 2.A.5) family.

It localises to the golgi apparatus. Its subcellular location is the trans-Golgi network membrane. The protein resides in the cell membrane. It is found in the cytoplasm. The protein localises to the perinuclear region. It localises to the mitochondrion. Its subcellular location is the nucleus. It carries out the reaction Zn(2+)(in) = Zn(2+)(out). In terms of biological role, transports zinc ions across cell and organelle membranes into the cytoplasm and regulates intracellular zinc homeostasis. Participates in the zinc ions efflux out of the secretory compartments. Regulates intracellular zinc level, resulting in the enhancement of AKT1 and MAPK3/MAPK1 (Erk1/2) phosphorylation in response to the BCR activation. Also functions as a membrane androgen receptor that mediates, through a G protein, the non-classical androgen signaling pathway, characterized by the activation of MAPK3/MAPK1 (Erk1/2) and transcription factors CREB1 or ATF1. Moreover, has dual functions as a membrane-bound androgen receptor and as an androgen-dependent zinc transporter both of which are mediated through an inhibitory G protein (Gi) that mediates both MAP kinase and zinc signaling leading to the androgen-dependent apoptotic process. This chain is Zinc transporter ZIP9-A (slc39a9-a), found in Xenopus laevis (African clawed frog).